A 502-amino-acid polypeptide reads, in one-letter code: Packaging protein 1 (502 aa).

The segment at 99–122 (EAMEGQNPTCSRHESAYPIQSQVS) is disordered. 226–233 (GPTGCGKS) is a binding site for ATP. The tract at residues 495–502 (RYYHSKKK) is DNA-binding.

Belongs to the adenoviridae packaging protein 1 family. As to quaternary structure, homodimer. Part of a genome packaging complex composed of packaging proteins 1, 2 and 3; this complex specifically binds to the packaging sequence on the left end of viral genomic DNA and performs packaging of the viral genome. Interacts with protein 33K.

The protein resides in the virion. Its subcellular location is the host nucleus. The protein localises to the host nucleoplasm. It localises to the host nucleolus. Functionally, component of the packaging machinery which encapsidates the viral DNA into preformed capsids and transcriptional activator of the viral major late promoter (MLP). Binds, along with packaging proteins 2 and 3, to the specific packaging sequence on the left end of viral genomic DNA and displays ATPase activity thereby providing the power stroke of the packaging machinery. The activity of packaging protein IVa2 is stimulated by protein 33K which acts as a terminase. May be the protein that pumps DNA into the capsid powered by ATP hydrolysis. Specifically binds to the 5'-CG-3' nucleotides of the repeats making up the packaging sequence. Component of the DEF-A and DEF-B transcription factors that bind downstream elements of the major late promoter (MLP), and stimulate transcription from the MLP after initiation of viral DNA replication. DEF-A is a heterodimer packaging proteins 1 and 2 and DEF-B is a homodimer of packaging protein 1. In Canis lupus familiaris (Dog), this protein is Packaging protein 1.